Consider the following 481-residue polypeptide: uncharacterized protein (481 aa).

The disordered stretch occupies residues 1–28 (MPQSNHYSHQSRSHNDRRRQQPDEKVQA). The TRAM domain maps to 29–87 (TVNIGQRFPLTIRRLGINGEGIGYYKHVITFVKGALPEEVVVAEVTAVHPRYLEAKIRS). Residues Q313, Y342, D363, and D411 each coordinate S-adenosyl-L-methionine. The active-site Nucleophile is the C438.

The protein belongs to the class I-like SAM-binding methyltransferase superfamily. RNA M5U methyltransferase family.

This is an uncharacterized protein from Lactiplantibacillus plantarum (strain ATCC BAA-793 / NCIMB 8826 / WCFS1) (Lactobacillus plantarum).